A 519-amino-acid polypeptide reads, in one-letter code: Cytochrome P450 monooxygenase AtmP (519 aa).

Residues 21–41 (SMLLVVTLVILFLWFIIPSPV) traverse the membrane as a helical segment. Position 457 (cysteine 457) interacts with heme.

It belongs to the cytochrome P450 family. It depends on heme as a cofactor.

It is found in the membrane. Its pathway is secondary metabolite biosynthesis. Its function is as follows. Cytochrome P450 monooxygenase; part of the ATM2 gene cluster that mediates the biosynthesis of aflatrem, a tremorgenic mycotoxin with acute neurotoxic effects. Synthesis of geranylgeranyl diphosphate (GGPP) by AtmG (a GGPP synthase) precedes condensation of GGPP with indole 3-glycerol phosphate, followed by epoxidation and cyclization by AtmM (a FAD-dependent monooxygenase) and AtmC (a prenyltransferase) to produce paspaline. AtmB is also essential for paspaline production, but its exact role has not been identified yet. AtmP, a cytochrome P450 monooxygenase, subsequently converts paspaline to 13-desoxypaxilline via PC-M6 by removal of the C-30 methyl group and oxidation at C-10. AtmQ, a cytochrome P450 monooxygenase, then catalyzes the oxidation of 13-desoxypaxilline, first at C-7 to produce paspalicine and then at C-13 to form paspalinine. Finally, AtmD prenylates paspalinine to form aflatrem. The polypeptide is Cytochrome P450 monooxygenase AtmP (Aspergillus flavus).